A 563-amino-acid chain; its full sequence is Tripeptidyl-peptidase 1 (563 aa).

Positions 1-19 (MGLQARFLGLLALVIAGKC) are cleaved as a signal peptide. The propeptide at 20–195 (THSPEPDQRW…PEPQGVGPVG (176 aa)) is removed in mature form. An intrachain disulfide couples cysteine 111 to cysteine 122. The 365-residue stretch at 199-563 (GVTPSVLRQR…PALLKTLLNP (365 aa)) folds into the Peptidase S53 domain. N-linked (GlcNAc...) asparagine glycans are attached at residues asparagine 210 and asparagine 222. Catalysis depends on charge relay system residues glutamate 272 and aspartate 276. Asparagine 286, asparagine 313, and asparagine 443 each carry an N-linked (GlcNAc...) asparagine glycan. Disulfide bonds link cysteine 365–cysteine 526 and cysteine 522–cysteine 537. Serine 475 (charge relay system) is an active-site residue. 2 residues coordinate Ca(2+): aspartate 517 and valine 518. Residues glycine 539, glycine 541, and aspartate 543 each coordinate Ca(2+).

Monomer. Interacts with CLN5. Interacts with CLN3. Ca(2+) is required as a cofactor. In terms of processing, activated by autocatalytic proteolytical processing upon acidification. N-glycosylation is required for processing and activity.

Its subcellular location is the lysosome. The protein resides in the melanosome. The enzyme catalyses Release of an N-terminal tripeptide from a polypeptide, but also has endopeptidase activity.. Lysosomal serine protease with tripeptidyl-peptidase I activity. May act as a non-specific lysosomal peptidase which generates tripeptides from the breakdown products produced by lysosomal proteinases. Requires substrates with an unsubstituted N-terminus. The chain is Tripeptidyl-peptidase 1 (Tpp1) from Rattus norvegicus (Rat).